We begin with the raw amino-acid sequence, 123 residues long: uncharacterized protein (123 aa).

Residues 17-74 (FQKKKKTGSQTRRTLKPQPQQLQQNLPKGHETTGHTYERVLQQQGSQERSPGLMSEDS) are disordered. Threonine 30 bears the Phosphothreonine mark. The segment covering 32 to 43 (KPQPQQLQQNLP) has biased composition (low complexity). Residues 44-54 (KGHETTGHTYE) are compositionally biased toward basic and acidic residues. A Phosphoserine modification is found at serine 62.

This is an uncharacterized protein from Homo sapiens (Human).